The chain runs to 216 residues: MAAGPRTSALLAFALLCLPWTREVGAFPAMPLSSLFANAVLRAQHLHQLAADTYKEFERAYIPEGQRYSIQNAQAAFCFSETIPAPTGKDEAQQRSDVELLRFSLLLIQSWLGPVQFLSRVFTNSLVFGTSDRVYEKLKDLEEGIQALMRELEDGSPRAGQILKQTYDKFDTNLRSDDALLKNYGLLSCFKKDLHKAETYLRVMKCRRFVESSCAF.

A signal peptide spans 1-26; it reads MAAGPRTSALLAFALLCLPWTREVGA. Position 45 (histidine 45) interacts with Zn(2+). Cysteine 78 and cysteine 189 are oxidised to a cystine. Residue serine 131 is modified to Phosphoserine. Glutamate 198 is a Zn(2+) binding site. An intrachain disulfide couples cysteine 206 to cysteine 214.

This sequence belongs to the somatotropin/prolactin family.

The protein resides in the secreted. Plays an important role in growth control. Its major role in stimulating body growth is to stimulate the liver and other tissues to secrete IGF1. It stimulates both the differentiation and proliferation of myoblasts. It also stimulates amino acid uptake and protein synthesis in muscle and other tissues. The sequence is that of Somatotropin (GH1) from Sus scrofa (Pig).